The primary structure comprises 473 residues: Adenosylhomocysteinase (473 aa).

Residues Thr-64, Asp-139, and Glu-199 each contribute to the substrate site. Position 200–202 (200–202 (TTT)) interacts with NAD(+). Substrate contacts are provided by Lys-229 and Asp-233. NAD(+) is bound by residues Asn-234, 263 to 268 (GYGDVG), Glu-286, Asn-321, 342 to 344 (IGH), and Asn-387.

It belongs to the adenosylhomocysteinase family. Requires NAD(+) as cofactor.

It localises to the cytoplasm. The catalysed reaction is S-adenosyl-L-homocysteine + H2O = L-homocysteine + adenosine. It functions in the pathway amino-acid biosynthesis; L-homocysteine biosynthesis; L-homocysteine from S-adenosyl-L-homocysteine: step 1/1. In terms of biological role, may play a key role in the regulation of the intracellular concentration of adenosylhomocysteine. The chain is Adenosylhomocysteinase from Burkholderia thailandensis (strain ATCC 700388 / DSM 13276 / CCUG 48851 / CIP 106301 / E264).